The chain runs to 397 residues: Pyruvate dehydrogenase E1 component subunit alpha, mitochondrial (397 aa).

Positions 98, 124, 125, 173, 175, 204, 205, 206, 233, and 235 each coordinate pyruvate. Tyr124, Arg125, Gly173, Val175, Asp204, Gly205, Ala206, and Asn233 together coordinate thiamine diphosphate. Asp204 serves as a coordination point for Mg(2+). Residues Asn233 and Tyr235 each coordinate Mg(2+). Thiamine diphosphate is bound at residue His299.

Tetramer of 2 alpha and 2 beta subunits. Thiamine diphosphate is required as a cofactor. Requires Mg(2+) as cofactor.

The protein localises to the mitochondrion matrix. The catalysed reaction is N(6)-[(R)-lipoyl]-L-lysyl-[protein] + pyruvate + H(+) = N(6)-[(R)-S(8)-acetyldihydrolipoyl]-L-lysyl-[protein] + CO2. Its activity is regulated as follows. E1 activity is regulated by phosphorylation (inactivation) and dephosphorylation (activation) of the alpha subunit. In terms of biological role, the pyruvate dehydrogenase complex catalyzes the overall conversion of pyruvate to acetyl-CoA and CO(2). It contains multiple copies of three enzymatic components: pyruvate dehydrogenase (E1), dihydrolipoamide acetyltransferase (E2) and lipoamide dehydrogenase (E3). The sequence is that of Pyruvate dehydrogenase E1 component subunit alpha, mitochondrial from Pisum sativum (Garden pea).